The sequence spans 185 residues: MIDEIELDAQERMEKSLVALKGQFSKIRTGRAHPSLLDGIMVPYYGVDTPLKQVANVVAEDSRTLALTVFDKSAIQAVEKAIMQSDLGLNPMSAGGSIRIPLPPLTEERRKDLIRVVRNEAEGGRVAIRNIRRDANGDVKDLLKEKEISEDESRAAEENIQSITNEFIKKVDSLLADKEKELMEV.

It belongs to the RRF family.

The protein resides in the cytoplasm. Responsible for the release of ribosomes from messenger RNA at the termination of protein biosynthesis. May increase the efficiency of translation by recycling ribosomes from one round of translation to another. This Alteromonas mediterranea (strain DSM 17117 / CIP 110805 / LMG 28347 / Deep ecotype) protein is Ribosome-recycling factor.